The following is a 566-amino-acid chain: Putative sensory transducer protein YvaQ (566 aa).

A signal peptide spans Met-1–Met-31. Residues Asp-74 to Lys-110 are a coiled coil. Residues Ile-186–Ile-206 traverse the membrane as a helical segment. The region spanning Arg-208–Gly-261 is the HAMP domain. Positions Ala-280–Phe-530 constitute a Methyl-accepting transducer domain. A coiled-coil region spans residues Ser-536–Ile-566.

It belongs to the methyl-accepting chemotaxis (MCP) protein family.

It localises to the cell membrane. In terms of biological role, chemotactic-signal transducers respond to changes in the concentration of attractants and repellents in the environment, transduce a signal from the outside to the inside of the cell, and facilitate sensory adaptation through the variation of the level of methylation. Attractants increase the level of methylation while repellents decrease the level of methylation. This is Putative sensory transducer protein YvaQ (yvaQ) from Bacillus subtilis (strain 168).